The following is a 257-amino-acid chain: Pyridoxal phosphate homeostasis protein (257 aa).

Residue Ser2 is modified to N-acetylserine. Lys49 carries the N6-(pyridoxal phosphate)lysine modification.

The protein belongs to the pyridoxal phosphate-binding protein YggS/PROSC family.

It is found in the cytoplasm. Its subcellular location is the nucleus. In terms of biological role, pyridoxal 5'-phosphate (PLP)-binding protein, which may be involved in intracellular homeostatic regulation of pyridoxal 5'-phosphate (PLP), the active form of vitamin B6. The chain is Pyridoxal phosphate homeostasis protein from Saccharomyces cerevisiae (strain ATCC 204508 / S288c) (Baker's yeast).